We begin with the raw amino-acid sequence, 111 residues long: Auxin-repressed 12.5 kDa protein (111 aa).

The segment at 18–111 is disordered; it reads ERGLGMLRKV…SGETRSKHHR (94 aa). Positions 43-57 are enriched in low complexity; sequence TMPTTPTTPVTPTTP. Residues 74–95 are compositionally biased toward polar residues; it reads SNLSSKTMGNQVFDSPQPNSPT.

This sequence belongs to the DRM1/ARP family.

The chain is Auxin-repressed 12.5 kDa protein from Fragaria ananassa (Strawberry).